A 242-amino-acid chain; its full sequence is Peptidyl-prolyl cis-trans isomerase FKBP20-2, chloroplastic (242 aa).

The transit peptide at 1–31 (MVTILSTPLSPRLTFLCETKLSLSRSNRSVC) directs the protein to the chloroplast. The transit peptide at 32–67 (CSLSEEPKDQCLSRRSLVYVLVASPCLLLPALSSSA) directs the protein to the thylakoid. The PPIase FKBP-type domain maps to 138 to 225 (GQQVTFHYIG…VFDVELLSIQ (88 aa)). Cys227 and Cys241 are oxidised to a cystine.

Belongs to the FKBP-type PPIase family. In terms of assembly, interacts in vitro with LTO1.

It is found in the plastid. The protein localises to the chloroplast thylakoid lumen. It catalyses the reaction [protein]-peptidylproline (omega=180) = [protein]-peptidylproline (omega=0). In terms of biological role, PPIases accelerate the folding of proteins. It catalyzes the cis-trans isomerization of proline imidic peptide bonds in oligopeptides. Involved in the accumulation of the PSII complex. This Arabidopsis thaliana (Mouse-ear cress) protein is Peptidyl-prolyl cis-trans isomerase FKBP20-2, chloroplastic.